The primary structure comprises 87 residues: uncharacterized protein (87 aa).

The protein to B.subtilis XkdR.

This is an uncharacterized protein from Bacillus subtilis (strain 168).